The following is a 389-amino-acid chain: Putative zinc finger CCCH domain-containing protein 10 (389 aa).

Over residues 1–11 (MANVSFTFDSQ) the composition is skewed to polar residues. Residues 1 to 110 (MANVSFTFDS…QDRRGSESRM (110 aa)) form a disordered region. 2 stretches are compositionally biased toward basic and acidic residues: residues 12-52 (EQNK…RVSE) and 86-110 (RSHETESRLWQRARTQDRRGSESRM). 2 C3H1-type zinc fingers span residues 131 to 157 (RPGEDNCLFYMKNHLCEWGSECCYNHP) and 158 to 190 (PLQEIPCRIGKKLDCKAGACKRGSNCPFNHPKE). Residues 183–296 (CPFNHPKERD…ATATGKVSGK (114 aa)) are disordered. 2 stretches are compositionally biased toward basic and acidic residues: residues 204-243 (PDLRRNDSGRRYNTESRSWPENKEKEVGQFRDHQDSKEDA) and 251-284 (RPRDVEMRKRSRSPDFRAKTETKEHREAEERSSR).

The protein is Putative zinc finger CCCH domain-containing protein 10 of Arabidopsis thaliana (Mouse-ear cress).